Here is a 500-residue protein sequence, read N- to C-terminus: Adenylosuccinate synthetase, chloroplastic (500 aa).

GTP is bound by residues 87–93 (GDEGKGK) and 115–117 (GHT). Asp-88 (proton acceptor) is an active-site residue. Residues Asp-88 and Gly-115 each contribute to the Mg(2+) site. IMP-binding positions include 88 to 91 (DEGK), 113 to 116 (NAGH), Thr-205, Arg-219, Gln-299, Thr-314, and Arg-378. Residue His-116 is the Proton donor of the active site. 374–380 (TTTGRPR) contributes to the substrate binding site. GTP-binding positions include Arg-380, 406-408 (KLD), and 489-491 (GIG).

Belongs to the adenylosuccinate synthetase family. Homodimer. The cofactor is Mg(2+).

The protein localises to the plastid. Its subcellular location is the chloroplast. It carries out the reaction IMP + L-aspartate + GTP = N(6)-(1,2-dicarboxyethyl)-AMP + GDP + phosphate + 2 H(+). It participates in purine metabolism; AMP biosynthesis via de novo pathway; AMP from IMP: step 1/2. Plays an important role in the de novo pathway and in the salvage pathway of purine nucleotide biosynthesis. Catalyzes the first committed step in the biosynthesis of AMP from IMP. The chain is Adenylosuccinate synthetase, chloroplastic from Solanum bulbocastanum (Wild potato).